The sequence spans 207 residues: Gap junction epsilon-1 protein (207 aa).

Residues 1 to 22 lie on the Cytoplasmic side of the membrane; that stretch reads MSLNYIKNFYEGCLRPPTVIGQ. Residues 23–43 form a helical membrane-spanning segment; that stretch reads FHTLFFGSVRTFFLGVLGFAV. The Extracellular portion of the chain corresponds to 44 to 74; the sequence is YGNEALHFSCDPDKRELNLYCYNQFRPITPQ. 2 cysteine pairs are disulfide-bonded: cysteine 53-cysteine 161 and cysteine 64-cysteine 147. A helical membrane pass occupies residues 75 to 95; the sequence is VFWALQLVTVLVPGAVFHLYA. Over 96–111 the chain is Cytoplasmic; it reads ACKNIDQEEILHRPMS. A helical transmembrane segment spans residues 112 to 132; the sequence is TVFYIISVLLRIILEVLAFWL. The Extracellular segment spans residues 133-175; that stretch reads QSHLFGFLVDPIFMCDVTGLGKILNVSKCMVPEHFEKTIFLSA. The chain crosses the membrane as a helical span at residues 176 to 196; the sequence is MYTFTIITILLCIAEIFEILF. At 197–207 the chain is on the cytoplasmic side; the sequence is RRLGYLNQPMT.

The protein belongs to the connexin family. Beta-type (group I) subfamily. As to quaternary structure, a connexon is composed of a hexamer of connexins.

The protein resides in the cell membrane. Its function is as follows. Has significant hemichannel activity. However, has only low-efficiency gap junction activity and probably does not function as a gap junction channel in vivo. The sequence is that of Gap junction epsilon-1 protein from Danio rerio (Zebrafish).